Consider the following 412-residue polypeptide: 2,3-bisphosphoglycerate-independent phosphoglycerate mutase (412 aa).

It belongs to the BPG-independent phosphoglycerate mutase family. A-PGAM subfamily.

The catalysed reaction is (2R)-2-phosphoglycerate = (2R)-3-phosphoglycerate. It participates in carbohydrate degradation; glycolysis; pyruvate from D-glyceraldehyde 3-phosphate: step 3/5. Functionally, catalyzes the interconversion of 2-phosphoglycerate and 3-phosphoglycerate. The chain is 2,3-bisphosphoglycerate-independent phosphoglycerate mutase from Methanobrevibacter smithii (strain ATCC 35061 / DSM 861 / OCM 144 / PS).